A 548-amino-acid chain; its full sequence is Lipase 2 (548 aa).

The N-terminal stretch at 1–14 is a signal peptide; that stretch reads MKLCLLALGAAVAA. Cysteine 74 and cysteine 111 form a disulfide bridge. The active-site Acyl-ester intermediate is the serine 223. Cysteine 282 and cysteine 291 are joined by a disulfide. Glutamate 355 serves as the catalytic Charge relay system. Asparagine 365 carries an N-linked (GlcNAc...) asparagine glycan. The Charge relay system role is filled by histidine 463.

The protein belongs to the type-B carboxylesterase/lipase family.

It carries out the reaction a triacylglycerol + H2O = a diacylglycerol + a fatty acid + H(+). The sequence is that of Lipase 2 (LIP2) from Diutina rugosa (Yeast).